A 582-amino-acid chain; its full sequence is Pescadillo homolog (582 aa).

Positions 277 to 329 form a coiled coil; that stretch reads LSALSASLARVVATVEEEENQLDNFPTEEEDQENMQAREKEQKEQEAQKRLFE. The span at 294–309 shows a compositional bias: acidic residues; sequence EENQLDNFPTEEEDQE. Positions 294-317 are disordered; that stretch reads EENQLDNFPTEEEDQENMQAREKE. Positions 323–416 constitute a BRCT domain; it reads AQKRLFEGLK…MRLPVEDYFL (94 aa). The segment covering 445 to 454 has biased composition (basic and acidic residues); it reads ALQRGEKPVQ. Disordered stretches follow at residues 445–511 and 554–582; these read ALQR…ETGS and REVN…AKKQ. The span at 455–477 shows a compositional bias: acidic residues; sequence EEDEEEEDEDEEEDDDVDDEEFT. Residues 478-490 show a composition bias toward basic and acidic residues; sequence EEKNLKKMEDTRA. Residues 517 to 582 adopt a coiled-coil conformation; sequence RLEQEEKAEE…QKKQKKAKKQ (66 aa). Positions 572–582 are enriched in basic residues; sequence AQKKQKKAKKQ.

This sequence belongs to the pescadillo family. As to quaternary structure, component of the PeBoW complex, composed of bop1, pes1 and wdr12. The complex is held together by bop1, which interacts with pes1 via its N-terminal domain and with wdr12 via a high-affinity interaction between the seven-bladed beta-propeller domains of the 2 proteins. The PeBoW complex associates with the 66S pre-ribosome.

Its subcellular location is the nucleus. It is found in the nucleolus. The protein resides in the nucleoplasm. In terms of biological role, component of the PeBoW complex, which is required for maturation of 28S and 5.8S ribosomal RNAs and formation of the 60S ribosome. In Salmo salar (Atlantic salmon), this protein is Pescadillo homolog (pes1).